A 70-amino-acid polypeptide reads, in one-letter code: Envelope small membrane protein (70 aa).

Gly-2 carries the N-myristoyl glycine; by host lipid modification. The interval 2-15 (GSLWSKISQLFVDA) is endoplasmic reticulum retention signal. The Virion surface segment spans residues 2–25 (GSLWSKISQLFVDAFTEFLVSVVD). A helical transmembrane segment spans residues 26–46 (IAIFLAILFGFTVAGWLLVFL). The Intravirion segment spans residues 47–70 (LRVVCSALLRSRSAIHSPELSKVL).

The protein belongs to the arteriviridae E protein family. As to quaternary structure, homooligomer. Associates with itself into higher-order structures, including dimers, trimers and tetramers. Associates with the GP2a-GP3-GP4 complex. In terms of processing, myristoylated. Post-translationally, not glycosylated.

Its subcellular location is the virion membrane. It is found in the host endoplasmic reticulum membrane. It localises to the host Golgi apparatus membrane. The protein resides in the secreted. Its function is as follows. Minor envelope protein. May function as a viroporin in the virion envelope that facilitates uncoating of the virus in order to release the genomic RNA into the cytoplasm for subsequent replication. The chain is Envelope small membrane protein (GP2b) from Sus scrofa (Pig).